Here is a 405-residue protein sequence, read N- to C-terminus: uncharacterized protein (405 aa).

Helical transmembrane passes span 3-23 (IIAK…PTTE), 42-62 (GITQ…ILTL), 73-93 (PIAL…IFAV), 95-115 (IEML…GSVI), 135-155 (SLSP…GYII), 162-182 (YVFV…YKVL), 209-229 (ILWL…GFFI), 248-268 (KLAF…GYLI), 280-300 (GLGF…AFIL), 309-329 (LAIA…NLLI), 346-366 (TAGS…TYLV), and 377-397 (FALL…CIWV).

It belongs to the major facilitator superfamily. Bcr/CmlA family.

The protein localises to the cell inner membrane. This is an uncharacterized protein from Rickettsia felis (strain ATCC VR-1525 / URRWXCal2) (Rickettsia azadi).